A 295-amino-acid chain; its full sequence is Acetylglutamate kinase (295 aa).

Residues 64 to 65 (GG), Arg-86, and Asn-190 contribute to the substrate site.

Belongs to the acetylglutamate kinase family. ArgB subfamily.

It is found in the cytoplasm. It carries out the reaction N-acetyl-L-glutamate + ATP = N-acetyl-L-glutamyl 5-phosphate + ADP. Its pathway is amino-acid biosynthesis; L-arginine biosynthesis; N(2)-acetyl-L-ornithine from L-glutamate: step 2/4. Its function is as follows. Catalyzes the ATP-dependent phosphorylation of N-acetyl-L-glutamate. In Pelotomaculum thermopropionicum (strain DSM 13744 / JCM 10971 / SI), this protein is Acetylglutamate kinase.